A 208-amino-acid polypeptide reads, in one-letter code: Small ribosomal subunit protein uS4 (208 aa).

The interval 24–52 is disordered; sequence GVKPFDVKTKKANKAPGQHGQARGGKQSE. The region spanning 98–160 is the S4 RNA-binding domain; sequence SRLDNVVYRM…AKQQLRIKNA (63 aa).

It belongs to the universal ribosomal protein uS4 family. As to quaternary structure, part of the 30S ribosomal subunit. Contacts protein S5. The interaction surface between S4 and S5 is involved in control of translational fidelity.

Its function is as follows. One of the primary rRNA binding proteins, it binds directly to 16S rRNA where it nucleates assembly of the body of the 30S subunit. In terms of biological role, with S5 and S12 plays an important role in translational accuracy. The polypeptide is Small ribosomal subunit protein uS4 (Acinetobacter baumannii (strain ACICU)).